Here is a 400-residue protein sequence, read N- to C-terminus: Elongation factor Tu (400 aa).

In terms of domain architecture, tr-type G spans 10-209; the sequence is KPHVNIGTIG…AVDKYIPTPQ (200 aa). The interval 19 to 26 is G1; sequence GHVDHGKT. 19–26 contributes to the GTP binding site; it reads GHVDHGKT. A Mg(2+)-binding site is contributed by threonine 26. A G2 region spans residues 60 to 64; it reads GITIN. The G3 stretch occupies residues 81–84; that stretch reads DCPG. Residues 81 to 85 and 136 to 139 contribute to the GTP site; these read DCPGH and NKVD. A G4 region spans residues 136–139; it reads NKVD. The G5 stretch occupies residues 174–176; that stretch reads SAL.

The protein belongs to the TRAFAC class translation factor GTPase superfamily. Classic translation factor GTPase family. EF-Tu/EF-1A subfamily. Monomer.

It localises to the cytoplasm. It carries out the reaction GTP + H2O = GDP + phosphate + H(+). In terms of biological role, GTP hydrolase that promotes the GTP-dependent binding of aminoacyl-tRNA to the A-site of ribosomes during protein biosynthesis. This chain is Elongation factor Tu, found in Caldicellulosiruptor bescii (strain ATCC BAA-1888 / DSM 6725 / KCTC 15123 / Z-1320) (Anaerocellum thermophilum).